Reading from the N-terminus, the 55-residue chain is Putative virulence-regulating protein PA2146 (55 aa).

A disordered region spans residues 1 to 55 (MAQHQGGKGNFAEDPKRASEAGKKGGQASGGNFKNDPQRASEAGKKGGQRSHGGN). Composition is skewed to basic and acidic residues over residues 11–23 (FAED…EAGK) and 36–45 (DPQRASEAGK).

The protein belongs to the con-10 family.

Its function is as follows. May be involved in the regulation of the production of pyocyanine, one of the major virulence factors secreted by P.aeruginosa, and other virulence factors. The protein is Putative virulence-regulating protein PA2146 of Pseudomonas aeruginosa (strain ATCC 15692 / DSM 22644 / CIP 104116 / JCM 14847 / LMG 12228 / 1C / PRS 101 / PAO1).